A 94-amino-acid chain; its full sequence is Pyrimidine/purine nucleoside phosphorylase (94 aa).

It belongs to the nucleoside phosphorylase PpnP family.

The catalysed reaction is a purine D-ribonucleoside + phosphate = a purine nucleobase + alpha-D-ribose 1-phosphate. The enzyme catalyses adenosine + phosphate = alpha-D-ribose 1-phosphate + adenine. It catalyses the reaction cytidine + phosphate = cytosine + alpha-D-ribose 1-phosphate. It carries out the reaction guanosine + phosphate = alpha-D-ribose 1-phosphate + guanine. The catalysed reaction is inosine + phosphate = alpha-D-ribose 1-phosphate + hypoxanthine. The enzyme catalyses thymidine + phosphate = 2-deoxy-alpha-D-ribose 1-phosphate + thymine. It catalyses the reaction uridine + phosphate = alpha-D-ribose 1-phosphate + uracil. It carries out the reaction xanthosine + phosphate = alpha-D-ribose 1-phosphate + xanthine. Its function is as follows. Catalyzes the phosphorolysis of diverse nucleosides, yielding D-ribose 1-phosphate and the respective free bases. Can use uridine, adenosine, guanosine, cytidine, thymidine, inosine and xanthosine as substrates. Also catalyzes the reverse reactions. The polypeptide is Pyrimidine/purine nucleoside phosphorylase (Vibrio campbellii (strain ATCC BAA-1116)).